A 193-amino-acid polypeptide reads, in one-letter code: dCTP deaminase (193 aa).

Residues 110–115, D128, 136–138, Y171, K178, and Q182 contribute to the dCTP site; these read RSSLAR and VLE. Residue E138 is the Proton donor/acceptor of the active site. A disordered region spans residues 169 to 193; it reads RPYNSRQDAKYRDQQGAVASRIDKD.

Belongs to the dCTP deaminase family. In terms of assembly, homotrimer.

It catalyses the reaction dCTP + H2O + H(+) = dUTP + NH4(+). It participates in pyrimidine metabolism; dUMP biosynthesis; dUMP from dCTP (dUTP route): step 1/2. Functionally, catalyzes the deamination of dCTP to dUTP. This chain is dCTP deaminase, found in Serratia proteamaculans (strain 568).